The following is a 431-amino-acid chain: Glutamate-1-semialdehyde 2,1-aminomutase (431 aa).

Lysine 267 carries the post-translational modification N6-(pyridoxal phosphate)lysine.

It belongs to the class-III pyridoxal-phosphate-dependent aminotransferase family. HemL subfamily. In terms of assembly, homodimer. Pyridoxal 5'-phosphate serves as cofactor.

It is found in the cytoplasm. It carries out the reaction (S)-4-amino-5-oxopentanoate = 5-aminolevulinate. It participates in porphyrin-containing compound metabolism; protoporphyrin-IX biosynthesis; 5-aminolevulinate from L-glutamyl-tRNA(Glu): step 2/2. The polypeptide is Glutamate-1-semialdehyde 2,1-aminomutase (Myxococcus xanthus (strain DK1622)).